The chain runs to 473 residues: B box and SPRY domain-containing protein (473 aa).

A disordered region spans residues 1-69; the sequence is MSADVSGTES…PKQGSERSQL (69 aa). Residues 35–51 show a composition bias toward pro residues; that stretch reads KPGPGPEPRPESGPEPG. The B box-type zinc-finger motif lies at 65-113; sequence ERSQLCPEHFEPLSWFCLSERRPVCATCAGFGGRCHRHRIRRAEEHAEE. The region spanning 259–455 is the B30.2/SPRY domain; the sequence is SPLLTQLWAA…ISIVRGPLAT (197 aa).

In terms of assembly, interacts with YWHAZ/14-3-3 protein zeta. Interacts with TRPV5 and TRPV6. As to expression, according to PubMed:10978534, testis-specific. According to PubMed:16371431, broadly expressed.

It is found in the cytoplasm. Its subcellular location is the membrane. In terms of biological role, may regulate epithelial calcium transport by inhibiting TRPV5 activity. This is B box and SPRY domain-containing protein (Bspry) from Mus musculus (Mouse).